The chain runs to 179 residues: ATP synthase subunit delta, chloroplastic (179 aa).

This sequence belongs to the ATPase delta chain family. F-type ATPases have 2 components, F(1) - the catalytic core - and F(0) - the membrane proton channel. F(1) has five subunits: alpha(3), beta(3), gamma(1), delta(1), epsilon(1). CF(0) has four main subunits: a(1), b(1), b'(1) and c(10-14). The alpha and beta chains form an alternating ring which encloses part of the gamma chain. F(1) is attached to F(0) by a central stalk formed by the gamma and epsilon chains, while a peripheral stalk is formed by the delta, b and b' chains.

It is found in the plastid. The protein localises to the chloroplast thylakoid membrane. Functionally, f(1)F(0) ATP synthase produces ATP from ADP in the presence of a proton or sodium gradient. F-type ATPases consist of two structural domains, F(1) containing the extramembraneous catalytic core and F(0) containing the membrane proton channel, linked together by a central stalk and a peripheral stalk. During catalysis, ATP synthesis in the catalytic domain of F(1) is coupled via a rotary mechanism of the central stalk subunits to proton translocation. Its function is as follows. This protein is part of the stalk that links CF(0) to CF(1). It either transmits conformational changes from CF(0) to CF(1) or is implicated in proton conduction. This is ATP synthase subunit delta, chloroplastic from Ochrosphaera neapolitana.